Consider the following 461-residue polypeptide: Cytochrome c biogenesis protein CcsB (461 aa).

Helical transmembrane passes span 32–52 (LRLAIALLLIIALFSISGTVI), 91–111 (TWWFLSLLVLFGTSLTACTFT), and 178–198 (IGPIIVHIGIVTILLGSIWGA).

It belongs to the Ccs1/CcsB family. In terms of assembly, may interact with CcsA.

The protein localises to the cellular thylakoid membrane. In terms of biological role, required during biogenesis of c-type cytochromes (cytochrome c6 and cytochrome f) at the step of heme attachment. This chain is Cytochrome c biogenesis protein CcsB, found in Nostoc sp. (strain PCC 7120 / SAG 25.82 / UTEX 2576).